The sequence spans 875 residues: Phosphoenolpyruvate carboxylase (875 aa).

Active-site residues include His-137 and Lys-542.

The protein belongs to the PEPCase type 1 family. The cofactor is Mg(2+).

The catalysed reaction is oxaloacetate + phosphate = phosphoenolpyruvate + hydrogencarbonate. In terms of biological role, forms oxaloacetate, a four-carbon dicarboxylic acid source for the tricarboxylic acid cycle. The protein is Phosphoenolpyruvate carboxylase of Pseudomonas putida (strain ATCC 47054 / DSM 6125 / CFBP 8728 / NCIMB 11950 / KT2440).